Consider the following 271-residue polypeptide: Urease accessory protein UreD (271 aa).

Belongs to the UreD family. In terms of assembly, ureD, UreF and UreG form a complex that acts as a GTP-hydrolysis-dependent molecular chaperone, activating the urease apoprotein by helping to assemble the nickel containing metallocenter of UreC. The UreE protein probably delivers the nickel.

The protein localises to the cytoplasm. Its function is as follows. Required for maturation of urease via the functional incorporation of the urease nickel metallocenter. The polypeptide is Urease accessory protein UreD (Haemophilus influenzae (strain PittGG)).